The sequence spans 424 residues: Histidine--tRNA ligase (424 aa).

This sequence belongs to the class-II aminoacyl-tRNA synthetase family. In terms of assembly, homodimer.

Its subcellular location is the cytoplasm. The enzyme catalyses tRNA(His) + L-histidine + ATP = L-histidyl-tRNA(His) + AMP + diphosphate + H(+). In Shewanella sediminis (strain HAW-EB3), this protein is Histidine--tRNA ligase.